A 182-amino-acid polypeptide reads, in one-letter code: Nudix hydrolase 17, mitochondrial (182 aa).

The transit peptide at 1-26 (MGVEKMVCLASRTGRQFQRYNKGRRQ) directs the protein to the mitochondrion. Residues 27-158 (VVGCVPYRFK…WMKEALDVLV (132 aa)) enclose the Nudix hydrolase domain. The Nudix box motif lies at 65-86 (GGWELDESVEEAASRECLEEAG). Glu80 and Glu84 together coordinate Mg(2+).

This sequence belongs to the Nudix hydrolase family. Mg(2+) is required as a cofactor. Requires Mn(2+) as cofactor. As to expression, expressed in roots, leaves, stems and inflorescences.

Its subcellular location is the mitochondrion. Its function is as follows. Probably mediates the hydrolysis of some nucleoside diphosphate derivatives. In Arabidopsis thaliana (Mouse-ear cress), this protein is Nudix hydrolase 17, mitochondrial (NUDT17).